A 1755-amino-acid chain; its full sequence is Transposon Ty1-JR1 Gag-Pol polyprotein (1755 aa).

Residues 1 to 16 (MESQQLSQHSHISHGS) show a composition bias toward low complexity. Disordered stretches follow at residues 1 to 93 (MESQ…MMTQ), 126 to 173 (PQSQ…RPPP), and 352 to 421 (GSRN…SKST). Composition is skewed to polar residues over residues 48-60 (TKAN…TPAS) and 127-152 (QSQF…GNTF). Positions 153–165 (TDSSSADSDMTST) are enriched in low complexity. The segment at 299-401 (NNGIHINNKV…NSKSKTARAH (103 aa)) is RNA-binding. Positions 402–418 (NVSTSNNSPSTDNDSIS) are enriched in low complexity. At Ser416 the chain carries Phosphoserine. Residue Asp461 is the For protease activity; shared with dimeric partner of the active site. The segment at 583–640 (NVHTSESTRKYPYPFIHRMLAHANAQTIRYSLKNNTITYFNESDVDWSSAIDYQCPDC) is integrase-type zinc finger-like. An Integrase catalytic domain is found at 660-835 (NSYEPFQYLH…AGLDISTLLP (176 aa)). Mg(2+) contacts are provided by Asp671 and Asp736. Disordered regions lie at residues 956 to 1087 (SKAV…ETEK), 1092 to 1111 (RSPS…NIVP), and 1130 to 1186 (DLPL…EDNE). Low complexity predominate over residues 960–969 (SPTDSTPPST). The span at 1005–1015 (STPQISNIEST) shows a compositional bias: polar residues. Over residues 1038 to 1053 (ESSHASKSKDFRHSDS) the composition is skewed to basic and acidic residues. Polar residues-rich tracts occupy residues 1054-1082 (YSEN…QISD) and 1101-1111 (PENNSSHNIVP). Positions 1178-1212 (KKRSLEDNETEIKVSRDTWNTKNMRSLEPPRSKKR) match the Bipartite nuclear localization signal motif. The 139-residue stretch at 1338–1476 (NNYYITQLDI…DILGLEIKYQ (139 aa)) folds into the Reverse transcriptase Ty1/copia-type domain. Residues Asp1346, Asp1427, Asp1428, Asp1610, Glu1652, and Asp1685 each contribute to the Mg(2+) site. One can recognise an RNase H Ty1/copia-type domain in the interval 1610–1752 (DASYGNQPYY…IKTFKLLTNK (143 aa)).

As to quaternary structure, the capsid protein forms a homotrimer, from which the VLPs are assembled. The protease is a homodimer, whose active site consists of two apposed aspartic acid residues. Post-translationally, initially, virus-like particles (VLPs) are composed of the structural unprocessed proteins Gag and Gag-Pol, and also contain the host initiator methionine tRNA (tRNA(i)-Met) which serves as a primer for minus-strand DNA synthesis, and a dimer of genomic Ty RNA. Processing of the polyproteins occurs within the particle and proceeds by an ordered pathway, called maturation. First, the protease (PR) is released by autocatalytic cleavage of the Gag-Pol polyprotein yielding capsid protein p45 and a Pol-p154 precursor protein. This cleavage is a prerequisite for subsequent processing of Pol-p154 at the remaining sites to release the mature structural and catalytic proteins. Maturation takes place prior to the RT reaction and is required to produce transposition-competent VLPs.

The protein resides in the cytoplasm. It is found in the nucleus. It catalyses the reaction DNA(n) + a 2'-deoxyribonucleoside 5'-triphosphate = DNA(n+1) + diphosphate. The catalysed reaction is Endonucleolytic cleavage to 5'-phosphomonoester.. Its function is as follows. Capsid protein (CA) is the structural component of the virus-like particle (VLP), forming the shell that encapsulates the retrotransposons dimeric RNA genome. The particles are assembled from trimer-clustered units and there are holes in the capsid shells that allow for the diffusion of macromolecules. CA also has nucleocapsid-like chaperone activity, promoting primer tRNA(i)-Met annealing to the multipartite primer-binding site (PBS), dimerization of Ty1 RNA and initiation of reverse transcription. In terms of biological role, the aspartyl protease (PR) mediates the proteolytic cleavages of the Gag and Gag-Pol polyproteins after assembly of the VLP. Reverse transcriptase/ribonuclease H (RT) is a multifunctional enzyme that catalyzes the conversion of the retro-elements RNA genome into dsDNA within the VLP. The enzyme displays a DNA polymerase activity that can copy either DNA or RNA templates, and a ribonuclease H (RNase H) activity that cleaves the RNA strand of RNA-DNA heteroduplexes during plus-strand synthesis and hydrolyzes RNA primers. The conversion leads to a linear dsDNA copy of the retrotransposon that includes long terminal repeats (LTRs) at both ends. Functionally, integrase (IN) targets the VLP to the nucleus, where a subparticle preintegration complex (PIC) containing at least integrase and the newly synthesized dsDNA copy of the retrotransposon must transit the nuclear membrane. Once in the nucleus, integrase performs the integration of the dsDNA into the host genome. The protein is Transposon Ty1-JR1 Gag-Pol polyprotein (TY1B-JR1) of Saccharomyces cerevisiae (strain ATCC 204508 / S288c) (Baker's yeast).